The chain runs to 146 residues: MMFEKTLSILKPDVVERGIIGRVLSYIEAAGLRIVAQRMCALSHEQAEAFYAVHKARPFFPSLVGFMTSGPVVVQVLVGESAVKTYRDVMGATNPSEAAPGTIRGDLAESIDANCVHGSDSLENAEWEIKFFFKEHEIMSSMPNGK.

ATP-binding residues include Lys11, Phe59, Arg87, Thr93, Arg104, and Asn114. Residue His117 is the Pros-phosphohistidine intermediate of the active site.

It belongs to the NDK family. Homotetramer. Mg(2+) serves as cofactor.

It localises to the cytoplasm. The enzyme catalyses a 2'-deoxyribonucleoside 5'-diphosphate + ATP = a 2'-deoxyribonucleoside 5'-triphosphate + ADP. It carries out the reaction a ribonucleoside 5'-diphosphate + ATP = a ribonucleoside 5'-triphosphate + ADP. Functionally, major role in the synthesis of nucleoside triphosphates other than ATP. The ATP gamma phosphate is transferred to the NDP beta phosphate via a ping-pong mechanism, using a phosphorylated active-site intermediate. The polypeptide is Nucleoside diphosphate kinase (Anaplasma marginale (strain Florida)).